The sequence spans 266 residues: MNTLNAPRNPTRHPAMTADTLVDAPALPHQNGSTEEKLKERGSFGKLYTYKRSPRALGIQAVAKSIGLELEQVELQPANGVPDFYWNLNPLGKTPTFVGADGLVLTECMAIALHVTNEDSTTTLLGSSSLDFVQIIRWISFTNTDVVTRMASWVRPLIGYTPYSKEEVLKAQQQTTQAIGVFEDSLRDRKYLVGDRLTLADIMCVSLVSFGFAQIFDKEWREAFPYFSGWYMMVMHLPIMKAVVEEVPFVEEGLPNAPPTEPFRAP.

The 81-residue stretch at 43–123 (SFGKLYTYKR…HVTNEDSTTT (81 aa)) folds into the GST N-terminal domain. Glutathione is bound by residues lysine 93, glutamate 107, cysteine 108, and asparagine 143. Lysine 93 contributes to the substrate binding site. Residues 128 to 259 (SSLDFVQIIR…VEEGLPNAPP (132 aa)) enclose the GST C-terminal domain.

This sequence belongs to the GST superfamily.

It participates in secondary metabolite biosynthesis; terpenoid biosynthesis. Its function is as follows. Glutathione S-transferase; part of the gene cluster that mediates the biosynthesis of the diterpene ent-pimara-8(14),15-diene (PD). Within the cluster, the HMG-CoA reductase AN1593 functions in the mevalonate pathway, which produces isoprenoid precursors. The geranylgeranyl pyrophosphate (GGPP) synthase AN1592 is needed in the formation of GGPP, the precursor for diterpenes. Lastly, the pimaradiene synthase pbcA performs the 2 cyclization steps that convert GGPP to ent-pimara-8(14),15-diene. The putative roles of the remaining cluster enzymes in ent-pimara-8(14),15-diene biosynthesis is unclear. The cytochrome P450 monooxygenase AN1598, the glutathione S-transferase AN1595, the oxidoreductases AN1596 and AN1597 probably function as decorative enzymes. It is possible that in biological conditions the compound is oxidized to ent-pimara-8(14),15-dien-19-oic acid, which is a bioactive diterpene compound predominant in many plant extracts. The protein is Glutathione S-transferase AN1595 of Emericella nidulans (strain FGSC A4 / ATCC 38163 / CBS 112.46 / NRRL 194 / M139) (Aspergillus nidulans).